The primary structure comprises 114 residues: Fumarate reductase subunit D (114 aa).

Helical transmembrane passes span isoleucine 24 to isoleucine 44, glycine 49 to phenylalanine 69, and leucine 94 to isoleucine 114.

This sequence belongs to the FrdD family. In terms of assembly, part of an enzyme complex containing four subunits: a flavoprotein (FrdA), an iron-sulfur protein (FrdB), and two hydrophobic anchor proteins (FrdC and FrdD).

Its subcellular location is the cell inner membrane. Functionally, anchors the catalytic components of the fumarate reductase complex to the cell membrane, binds quinones. This Actinobacillus succinogenes (strain ATCC 55618 / DSM 22257 / CCUG 43843 / 130Z) protein is Fumarate reductase subunit D.